The chain runs to 549 residues: Glucose-6-phosphate isomerase (549 aa).

Glutamate 355 acts as the Proton donor in catalysis. Catalysis depends on residues histidine 386 and lysine 514.

Belongs to the GPI family.

It localises to the cytoplasm. The catalysed reaction is alpha-D-glucose 6-phosphate = beta-D-fructose 6-phosphate. Its pathway is carbohydrate biosynthesis; gluconeogenesis. The protein operates within carbohydrate degradation; glycolysis; D-glyceraldehyde 3-phosphate and glycerone phosphate from D-glucose: step 2/4. In terms of biological role, catalyzes the reversible isomerization of glucose-6-phosphate to fructose-6-phosphate. The sequence is that of Glucose-6-phosphate isomerase from Salmonella paratyphi B (strain ATCC BAA-1250 / SPB7).